We begin with the raw amino-acid sequence, 228 residues long: Lipoprotein-releasing system ATP-binding protein LolD (228 aa).

The ABC transporter domain maps to 6-228 (LRLSGIEKTY…LSDGRLSAES (223 aa)). Residue 43-50 (APSGAGKS) coordinates ATP.

The protein belongs to the ABC transporter superfamily. Lipoprotein translocase (TC 3.A.1.125) family. In terms of assembly, the complex is composed of two ATP-binding proteins (LolD) and two transmembrane proteins (LolC and LolE).

The protein localises to the cell inner membrane. Functionally, part of the ABC transporter complex LolCDE involved in the translocation of mature outer membrane-directed lipoproteins, from the inner membrane to the periplasmic chaperone, LolA. Responsible for the formation of the LolA-lipoprotein complex in an ATP-dependent manner. This is Lipoprotein-releasing system ATP-binding protein LolD from Ruegeria pomeroyi (strain ATCC 700808 / DSM 15171 / DSS-3) (Silicibacter pomeroyi).